Consider the following 351-residue polypeptide: MTTPAATTDLSALPTLSSELNELNEAQLIEFTSAAEALILQVSDVRLLQDLRVQLTGKKSPLTGWSKQMGKLSNDDKKTYGGWLHEVRSRIQDALTAQQQQLEVVALNAKLASESIDITLPARGGQKGHLHPVTMITQRMQQYFIQAGFNVATGPEVESDYYNFEALNIPSHHPARAMHDTFYFDAHYLLRTHTSPVQIRTMEKNEPPIRIICPGRVYRNDSDQTHSPMFHQLEGLMVTESSTFAELKGLISEFLEAFFAKELTVRFRPSFFPFTEPSAEVDILDDNGKWLEVMGCGMVHPQVLTNCGIDAEKYTGFAFGMGIERFAMLYYGIDDLRLFFQNDVRFLKQFG.

Glu-276 contacts Mg(2+).

This sequence belongs to the class-II aminoacyl-tRNA synthetase family. Phe-tRNA synthetase alpha subunit type 1 subfamily. Tetramer of two alpha and two beta subunits. The cofactor is Mg(2+).

Its subcellular location is the cytoplasm. It catalyses the reaction tRNA(Phe) + L-phenylalanine + ATP = L-phenylalanyl-tRNA(Phe) + AMP + diphosphate + H(+). The protein is Phenylalanine--tRNA ligase alpha subunit of Psychrobacter arcticus (strain DSM 17307 / VKM B-2377 / 273-4).